The following is a 424-amino-acid chain: UDP-N-acetylglucosamine 1-carboxyvinyltransferase (424 aa).

22–23 (KN) contacts phosphoenolpyruvate. Arginine 93 serves as a coordination point for UDP-N-acetyl-alpha-D-glucosamine. Cysteine 117 functions as the Proton donor in the catalytic mechanism. Cysteine 117 carries the post-translational modification 2-(S-cysteinyl)pyruvic acid O-phosphothioketal. UDP-N-acetyl-alpha-D-glucosamine-binding positions include 122-126 (RPVDL), 162-165 (KVSV), aspartate 307, and isoleucine 329.

The protein belongs to the EPSP synthase family. MurA subfamily.

The protein resides in the cytoplasm. The enzyme catalyses phosphoenolpyruvate + UDP-N-acetyl-alpha-D-glucosamine = UDP-N-acetyl-3-O-(1-carboxyvinyl)-alpha-D-glucosamine + phosphate. It functions in the pathway cell wall biogenesis; peptidoglycan biosynthesis. In terms of biological role, cell wall formation. Adds enolpyruvyl to UDP-N-acetylglucosamine. This Histophilus somni (strain 129Pt) (Haemophilus somnus) protein is UDP-N-acetylglucosamine 1-carboxyvinyltransferase.